The following is a 408-amino-acid chain: NADH-quinone oxidoreductase subunit D (408 aa).

The protein belongs to the complex I 49 kDa subunit family. In terms of assembly, NDH-1 is composed of 14 different subunits. Subunits NuoB, C, D, E, F, and G constitute the peripheral sector of the complex.

The protein resides in the cell inner membrane. It carries out the reaction a quinone + NADH + 5 H(+)(in) = a quinol + NAD(+) + 4 H(+)(out). Its function is as follows. NDH-1 shuttles electrons from NADH, via FMN and iron-sulfur (Fe-S) centers, to quinones in the respiratory chain. The immediate electron acceptor for the enzyme in this species is believed to be ubiquinone. Couples the redox reaction to proton translocation (for every two electrons transferred, four hydrogen ions are translocated across the cytoplasmic membrane), and thus conserves the redox energy in a proton gradient. This Campylobacter jejuni subsp. jejuni serotype O:23/36 (strain 81-176) protein is NADH-quinone oxidoreductase subunit D.